Consider the following 121-residue polypeptide: Large ribosomal subunit protein bL19 (121 aa).

The protein belongs to the bacterial ribosomal protein bL19 family.

Its function is as follows. This protein is located at the 30S-50S ribosomal subunit interface and may play a role in the structure and function of the aminoacyl-tRNA binding site. In Acidothermus cellulolyticus (strain ATCC 43068 / DSM 8971 / 11B), this protein is Large ribosomal subunit protein bL19.